The chain runs to 177 residues: Embryogenesis-like protein (177 aa).

Positions 98–118 (VDEINLKFAEAREEIEMAMDA) form a coiled coil.

As to quaternary structure, interacts with HAG1/GCN5. In terms of tissue distribution, expressed in flowers, leaves, stems and siliques.

It is found in the nucleus. Activates gene expression by recruiting HAG1/GCN5 and triggering subsequent histone H3 acetylation of target genes promoters. The polypeptide is Embryogenesis-like protein (Arabidopsis thaliana (Mouse-ear cress)).